The following is a 247-amino-acid chain: 4-hydroxy-tetrahydrodipicolinate reductase (247 aa).

NAD(+) is bound by residues 12-17 (GITGRM), 78-80 (GTT), and 102-105 (AANF). Residue H136 is the Proton donor/acceptor of the active site. Residue H137 coordinates (S)-2,3,4,5-tetrahydrodipicolinate. The Proton donor role is filled by K140. 146–147 (GT) contacts (S)-2,3,4,5-tetrahydrodipicolinate.

This sequence belongs to the DapB family.

It localises to the cytoplasm. It carries out the reaction (S)-2,3,4,5-tetrahydrodipicolinate + NAD(+) + H2O = (2S,4S)-4-hydroxy-2,3,4,5-tetrahydrodipicolinate + NADH + H(+). The enzyme catalyses (S)-2,3,4,5-tetrahydrodipicolinate + NADP(+) + H2O = (2S,4S)-4-hydroxy-2,3,4,5-tetrahydrodipicolinate + NADPH + H(+). Its pathway is amino-acid biosynthesis; L-lysine biosynthesis via DAP pathway; (S)-tetrahydrodipicolinate from L-aspartate: step 4/4. Its function is as follows. Catalyzes the conversion of 4-hydroxy-tetrahydrodipicolinate (HTPA) to tetrahydrodipicolinate. This chain is 4-hydroxy-tetrahydrodipicolinate reductase, found in Acidiphilium cryptum (strain JF-5).